We begin with the raw amino-acid sequence, 109 residues long: MAMKIRCNDQIIVLTGKDKGKRTKIKKILKNGKVILEGVNLVKKHQKPVPAQNQPGGIIEKEAPIDFSNVAIFNEDTGKADRIGFKYENGKKVRFFKSSGKAIAKINKS.

This sequence belongs to the universal ribosomal protein uL24 family. Part of the 50S ribosomal subunit.

In terms of biological role, one of two assembly initiator proteins, it binds directly to the 5'-end of the 23S rRNA, where it nucleates assembly of the 50S subunit. One of the proteins that surrounds the polypeptide exit tunnel on the outside of the subunit. The protein is Large ribosomal subunit protein uL24 of Hamiltonella defensa subsp. Acyrthosiphon pisum (strain 5AT).